The chain runs to 109 residues: Probable WRKY transcription factor 43 (109 aa).

The WRKY DNA-binding region spans 24–89 (SDADILDDGY…YEGIHNHPCE (66 aa)).

Belongs to the WRKY group II-c family.

The protein localises to the nucleus. Its function is as follows. Transcription factor. Interacts specifically with the W box (5'-(T)TGAC[CT]-3'), a frequently occurring elicitor-responsive cis-acting element. In Arabidopsis thaliana (Mouse-ear cress), this protein is Probable WRKY transcription factor 43 (WRKY43).